The sequence spans 303 residues: Siderophore enterobactin esterase (303 aa).

The protein belongs to the esterase D family. Homodimer.

It catalyses the reaction enterobactin + 3 H2O = 3 N-(2,3-dihydroxybenzoyl)-L-serine + 2 H(+). Functionally, displays specific enterobactin (ENB) esterase activity required for intracellular release of iron. Enterobactin is a xenosiderophore that is selectively produced by Gram-negative Enterobacteriaceae. The affinity for enterobactin is quite high, potentially due to the low natural abundance of this xenosiderophore in fungal habitats. Does not hydrolyze triacetylfusarinine C (TAFC). This Emericella nidulans (strain FGSC A4 / ATCC 38163 / CBS 112.46 / NRRL 194 / M139) (Aspergillus nidulans) protein is Siderophore enterobactin esterase.